The following is a 157-amino-acid chain: Protein Smg homolog (157 aa).

The protein belongs to the Smg family.

The chain is Protein Smg homolog from Aliivibrio fischeri (strain MJ11) (Vibrio fischeri).